We begin with the raw amino-acid sequence, 583 residues long: Torsin-1A-interacting protein 1 (583 aa).

Over 1–339 (MAGERWRAEG…DESSVKIKWW (339 aa)) the chain is Nuclear. The tract at residues 23–208 (APIREGRRRL…PPLRSPRPDA (186 aa)) is disordered. S60 bears the Phosphoserine mark. 2 stretches are compositionally biased toward basic and acidic residues: residues 70–101 (FEPRAAKERSPGERRTPPEKFRSDSAKEEVRE) and 115–132 (GPQEAEEMKTRRSTRLEQ). S134, S142, S155, and S157 each carry phosphoserine. A compositionally biased stretch (polar residues) spans 166–188 (SSQPVTSQTVSKKTVRTPETSVM). S189 carries the phosphoserine modification. The residue at position 222 (T222) is a Phosphothreonine. Residues S228, S231, and S242 each carry the phosphoserine modification. K309 is covalently cross-linked (Glycyl lysine isopeptide (Lys-Gly) (interchain with G-Cter in SUMO2)). S316 is modified (phosphoserine). Residues 340–360 (LLILVAALAMGIYWFFHTPVV) traverse the membrane as a helical segment. Residues 356–583 (HTPVVETTAV…ENALKAGSCL (228 aa)) are interaction with TOR1A. The stretch at 360 to 388 (VETTAVQEFQNQMKQLQSKYQSQDEKLWK) forms a coiled coil. The Perinuclear space segment spans residues 361-583 (ETTAVQEFQN…ENALKAGSCL (223 aa)). N399 is a glycosylation site (N-linked (GlcNAc...) asparagine).

This sequence belongs to the TOR1AIP family. Interacts with ATP1B4. Interacts with TOR1A (ATP-bound). Interacts with TOR1B, TOR2A and TOR3A. Interacts with VIM.

The protein resides in the nucleus inner membrane. In terms of biological role, required for nuclear membrane integrity. Induces TOR1A and TOR1B ATPase activity and is required for their location on the nuclear membrane. Binds to A- and B-type lamins. Possible role in membrane attachment and assembly of the nuclear lamina. This Rattus norvegicus (Rat) protein is Torsin-1A-interacting protein 1 (Tor1aip1).